A 148-amino-acid polypeptide reads, in one-letter code: Hemoglobin subunit beta (148 aa).

A Globin domain is found at 3 to 148 (DWTDAERSAI…VVSALGRQYH (146 aa)). Residues His64 and His93 each coordinate heme b.

It belongs to the globin family. Heterotetramer of two alpha chains and two beta chains. As to expression, red blood cells.

In terms of biological role, involved in oxygen transport from gills to the various peripheral tissues. The sequence is that of Hemoglobin subunit beta (hbb) from Salmo salar (Atlantic salmon).